A 163-amino-acid chain; its full sequence is MLGKISLLLLPVFVAINLVHSSPEIIKNLSQNFCKAMDQCKQELNIPDSVIADLYNFWKDDYVMTDRLAGCAINCMATKLDVVDPDGNLHHGNAKEFAMKHGADASMAQQLVDIIHGCEKSAPPNDDKCMKTIDVAMCFKKEIHKLNWVPDMDVVLGEVLAEV.

The N-terminal stretch at 1-21 (MLGKISLLLLPVFVAINLVHS) is a signal peptide. Cystine bridges form between cysteine 40/cysteine 75, cysteine 71/cysteine 129, and cysteine 118/cysteine 138.

This sequence belongs to the PBP/GOBP family. As to expression, antenna.

Its function is as follows. This major soluble protein in olfactory sensilla of male moths might serve to solubilize the extremely hydrophobic pheromone molecules and to transport pheromone through the aqueous lymph to receptors located on olfactory cilia. The sequence is that of Pheromone-binding protein 1 from Antheraea pernyi (Chinese oak silk moth).